The sequence spans 292 residues: Cyclin-dependent-like kinase 5 (292 aa).

Residues 4 to 286 (YDKMEKIGEG…ADAALRHAYF (283 aa)) enclose the Protein kinase domain. ATP-binding positions include 10 to 18 (IGEGTYGTV) and Lys33. Asp126 serves as the catalytic Proton acceptor. Residues Asn131 and Asp144 each coordinate Mg(2+).

It belongs to the protein kinase superfamily. CMGC Ser/Thr protein kinase family. CDC2/CDKX subfamily. Heterodimer composed of a catalytic subunit cdk-5 and a regulatory subunit cdka-1. Interaction with cdka-1 is required for cdk-5 activation. It depends on Mg(2+) as a cofactor.

The protein resides in the cytoplasm. The protein localises to the cell projection. Its subcellular location is the dendrite. The enzyme catalyses L-seryl-[protein] + ATP = O-phospho-L-seryl-[protein] + ADP + H(+). It catalyses the reaction L-threonyl-[protein] + ATP = O-phospho-L-threonyl-[protein] + ADP + H(+). Functionally, proline-directed serine/threonine-protein kinase which, in several motor neurons, promotes the polarized trafficking of synaptic vesicles and dense-core vesicles (DCV). In the ventral nerve cord, phosphorylates lin-10 and thereby prevents lin-10-mediated anterograde trafficking of the glutamate receptor glr-1. Involved in the inhibition of glr-1 trafficking in hypoxic conditions. In DA motor neurons but not in DB motor neurons, regulates axonal transport of synaptic vesicle precursors by inhibiting dynein-mediated retrograde transport. Regulates the trafficking of dense-core vesicles in DA and DB motor neurons by promoting anterograde trafficking to the axon and preventing dynein-dependent trafficking to the dendrite. May regulate these processes in association with cdka-1/p35. Activity may be regulated by cyy-1. Involved in synapse formation during DD motor neuron remodeling by regulating transport of disassembled synaptic material to the new synaptic sites probably by activating the motor protein unc-104/kinesin-3. Regulates microtubule polarity in the dendrite of DB motor neurons. May also play a role in GABAergic synaptic vesicle localization in the ventral nerve cord. The polypeptide is Cyclin-dependent-like kinase 5 (Caenorhabditis elegans).